Consider the following 263-residue polypeptide: Putative S-adenosyl-L-methionine-dependent methyltransferase Mjls_0079 (263 aa).

S-adenosyl-L-methionine is bound by residues Asp-121 and 150–151 (ES).

Belongs to the UPF0677 family.

In terms of biological role, exhibits S-adenosyl-L-methionine-dependent methyltransferase activity. This Mycobacterium sp. (strain JLS) protein is Putative S-adenosyl-L-methionine-dependent methyltransferase Mjls_0079.